The chain runs to 343 residues: Insertion element IS630 uncharacterized 39 kDa protein (343 aa).

The polypeptide is Insertion element IS630 uncharacterized 39 kDa protein (Shigella sonnei).